The sequence spans 278 residues: Chitosanase (278 aa).

A signal peptide spans 1 to 40; sequence MHSQHRTARIALAVVLTAIPASLATAGVGYASTQASTAVK. Residue E62 is the Proton donor of the active site. Catalysis depends on D80, which acts as the Nucleophile.

Belongs to the glycosyl hydrolase 46 family.

The protein localises to the secreted. The catalysed reaction is Endohydrolysis of beta-(1-&gt;4)-linkages between D-glucosamine residues in a partly acetylated chitosan.. Functionally, aids in the defense against invading fungal pathogens by degrading their cell wall chitosan. This chain is Chitosanase (csn), found in Streptomyces sp. (strain N174).